The following is a 188-amino-acid chain: Ribosome-recycling factor (188 aa).

The protein belongs to the RRF family.

Its subcellular location is the cytoplasm. Functionally, responsible for the release of ribosomes from messenger RNA at the termination of protein biosynthesis. May increase the efficiency of translation by recycling ribosomes from one round of translation to another. The chain is Ribosome-recycling factor from Blochmanniella pennsylvanica (strain BPEN).